Consider the following 678-residue polypeptide: ERAD-associated E3 ubiquitin-protein ligase component HRD3A (678 aa).

An N-terminal signal peptide occupies residues 1 to 25 (MRILSYGIVILSLLVFSFIEFGVHA). The interval 40 to 71 (GGDDNGVGESSDFDEFGESEPKSEEELDPGSW) is disordered. Sel1-like repeat units lie at residues 124–159 (PHAQSIMGFVYGIGMMREKSKSKSFLHHNFAAAGGN), 242–277 (ANAMYKIGLFYYFGLRGLRRDHTKALHWFLKAVDKG), 279–313 (PRSMELLGEIYARGAGVERNYTKALEWLTLAAKEG), 317–349 (AFNGIGYLYVKGYGVDKKNYTKAREYFEKAVDN), 353–386 (SGHYNLGVLYLKGIGVNRDVRQATKYFFVAANAG), 388–422 (PKAFYQLAKMFHTGVGLKKNLEMATSFYKLVAERG), 506–537 (AALLIGDAYYYGRGTERDFVRAAEAYMHAKSQ), and 540–568 (AQAMFNLGYMHEHGQGLPFDLHLAKRYYD). Asparagine 298 and asparagine 335 each carry an N-linked (GlcNAc...) asparagine glycan. The chain crosses the membrane as a helical span at residues 620–640 (VVFEEGNATILTLFVCLITIL).

The protein belongs to the sel-1 family. As to quaternary structure, interacts with OS9.

The protein resides in the endoplasmic reticulum membrane. Its function is as follows. Component of the endoplasmic reticulum (ER) quality control system called ER-associated degradation (ERAD) and involved in ubiquitin-dependent degradation of misfolded endoplasmic reticulum proteins. Functions as an ERAD substrate-recruiting factor that recognizes misfolded proteins for the HRD1 E3 ubiquitin ligase complex. Targets the misfolded LRR receptor kinase BRI1. This chain is ERAD-associated E3 ubiquitin-protein ligase component HRD3A, found in Arabidopsis thaliana (Mouse-ear cress).